The primary structure comprises 356 residues: 5-formaminoimidazole-4-carboxamide-1-(beta)-D-ribofuranosyl 5'-monophosphate synthetase (356 aa).

5-amino-1-(5-phospho-beta-D-ribosyl)imidazole-4-carboxamide is bound by residues His27 and Ser94. The ATP-grasp domain occupies 101–333 (TENFADMAVP…YADLMEENLS (233 aa)). ATP-binding positions include 145–196 (PHDI…TRYY) and Glu226. Position 255 (Asn255) interacts with 5-amino-1-(5-phospho-beta-D-ribosyl)imidazole-4-carboxamide. The Mg(2+) site is built by Glu293 and Glu306.

It belongs to the phosphohexose mutase family. Mg(2+) serves as cofactor. The cofactor is Mn(2+).

It carries out the reaction 5-amino-1-(5-phospho-beta-D-ribosyl)imidazole-4-carboxamide + formate + ATP = 5-formamido-1-(5-phospho-D-ribosyl)imidazole-4-carboxamide + ADP + phosphate. It participates in purine metabolism; IMP biosynthesis via de novo pathway; 5-formamido-1-(5-phospho-D-ribosyl)imidazole-4-carboxamide from 5-amino-1-(5-phospho-D-ribosyl)imidazole-4-carboxamide (formate route): step 1/1. Functionally, catalyzes the ATP- and formate-dependent formylation of 5-aminoimidazole-4-carboxamide-1-beta-d-ribofuranosyl 5'-monophosphate (AICAR) to 5-formaminoimidazole-4-carboxamide-1-beta-d-ribofuranosyl 5'-monophosphate (FAICAR) in the absence of folates. This Methanosarcina barkeri (strain Fusaro / DSM 804) protein is 5-formaminoimidazole-4-carboxamide-1-(beta)-D-ribofuranosyl 5'-monophosphate synthetase.